A 276-amino-acid chain; its full sequence is 2,3,4,5-tetrahydropyridine-2,6-dicarboxylate N-succinyltransferase (276 aa).

Residues R107 and D144 each contribute to the substrate site.

It belongs to the transferase hexapeptide repeat family. In terms of assembly, homotrimer.

It localises to the cytoplasm. The catalysed reaction is (S)-2,3,4,5-tetrahydrodipicolinate + succinyl-CoA + H2O = (S)-2-succinylamino-6-oxoheptanedioate + CoA. The protein operates within amino-acid biosynthesis; L-lysine biosynthesis via DAP pathway; LL-2,6-diaminopimelate from (S)-tetrahydrodipicolinate (succinylase route): step 1/3. This chain is 2,3,4,5-tetrahydropyridine-2,6-dicarboxylate N-succinyltransferase, found in Gluconobacter oxydans (strain 621H) (Gluconobacter suboxydans).